A 314-amino-acid polypeptide reads, in one-letter code: Cathepsin L 2 (314 aa).

Positions 1–24 (MMLLGASLYLNNTQEVSDEIDTAN) are cleaved as a signal peptide. Positions 25–109 (LYANWKMKYN…NASNANFQYK (85 aa)) are cleaved as a propeptide — activation peptide. Intrachain disulfides connect cysteine 132-cysteine 175, cysteine 166-cysteine 207, and cysteine 259-cysteine 302. Cysteine 135 is an active-site residue. Active-site residues include histidine 265 and asparagine 282.

It belongs to the peptidase C1 family.

The protein localises to the secreted. The enzyme catalyses Specificity close to that of papain. As compared to cathepsin B, cathepsin L exhibits higher activity toward protein substrates, but has little activity on Z-Arg-Arg-NHMec, and no peptidyl-dipeptidase activity.. In terms of biological role, may be involved in extracellular digestion. The protein is Cathepsin L 2 of Paramecium tetraurelia.